The sequence spans 160 residues: Transcription elongation factor GreA (160 aa).

Positions 4-70 (QKQYPMTQEG…IEQDIQRIEH (67 aa)) form a coiled coil.

This sequence belongs to the GreA/GreB family.

Its function is as follows. Necessary for efficient RNA polymerase transcription elongation past template-encoded arresting sites. The arresting sites in DNA have the property of trapping a certain fraction of elongating RNA polymerases that pass through, resulting in locked ternary complexes. Cleavage of the nascent transcript by cleavage factors such as GreA or GreB allows the resumption of elongation from the new 3'terminus. GreA releases sequences of 2 to 3 nucleotides. The polypeptide is Transcription elongation factor GreA (Staphylococcus carnosus (strain TM300)).